We begin with the raw amino-acid sequence, 1079 residues long: MTENKTKVKDLAAELGVTTKELGQVLKDMNISAKTSTSVIAQEDLPRIKERVQAQRDGGARKEGNPDVIVRRRHRDGDRASARAEAKAPEQEATAAMPETSAPERAEEADKPAVAKPAKAPETEAHARARKEPQAEPVKARIIRRPDEPAPVAKVVEAAPAETPAPEAPAVKATVTAEAAPAKTVEPESERPQADKPATARVVRPATPDASAVPDGTSSAPTLPVRSAEPSDTVERADADADGDDDDAQQRRRKKKRRQPEAVVPQVRVISRPDPAAVAQQQMQQQAAQQQREAGGYRPGGQRPEGGYRPEGQREGGYRPEGQREGGYRPGGAPRPEGGYRPGGPRPEGGYRPGAPRPEGGYRPAGGPRPEGQREGGYRPGAPRPEGGYRPAGGAPRPEGQREGGYRPAGGPPRPGGAPRPGGFGGAPGGMPVPGADGRGDQSKKKRQKGRRTVDFQADGPRGRSDDDVMRGPRGRGKRGKKDVRPAATQPLKAIKRKIKVDEAIRVADMAHQMGLKANEIIKVLFGLGVMATINQSLDIDTATVVAGEFGYEVEKVGFSEDDYLVPKEEDAPETLVTRPPVVTIMGHVDHGKTSLLDAIRKSNVTAGEAGGITQHIGAYHVTTKKGEIVFLDTPGHEAFTAMRARGAQITDLVVLVVAADDGVMEQTREAVNHSKAAGVPIMVAVNKMDKEGANPDRVIRELSELGLVAEDWGGDTIFAKVSAKTREGLDELLELIAIQAEILELKANPDKAARGHVVEAKLDKGRGPLATVLVQEGTLRQGDAFVCGVFAGRVRAMFDDQGRKVKEAGPSTPVEVQGFDGVVEAGEEFVSVADDKVARRIAESRAVKQRERELAKESKVTLETFLSRRADAAEALTLNLVLKADVQGTLEAISEAVRKLSTEKVKINIIHGGAGAITESDILLASASDAIIIGFNVRPTSKVKDIAEQENVDIRFYDIIYKLVDEIKSAMAGMLAPVQREVYLGQAEVRETFSVPKIGVIAGCHVADGKVTRNAGVRLLRDGVVVYTGKITSLKRFKDDVRDVQKGYECGMGLENFNDIKVGDVIEAFEMVEEAATL.

Composition is skewed to basic and acidic residues over residues 52 to 65 (VQAQ…KEGN), 75 to 90 (RDGD…KAPE), and 102 to 134 (APER…KEPQ). A disordered region spans residues 52–488 (VQAQRDGGAR…RGKKDVRPAA (437 aa)). Over residues 150 to 184 (APVAKVVEAAPAETPAPEAPAVKATVTAEAAPAKT) the composition is skewed to low complexity. Residues 185–194 (VEPESERPQA) show a composition bias toward basic and acidic residues. The span at 276 to 291 (AAVAQQQMQQQAAQQQ) shows a compositional bias: low complexity. Basic and acidic residues predominate over residues 306–327 (GGYRPEGQREGGYRPEGQREGG). 2 stretches are compositionally biased toward low complexity: residues 348–370 (EGGY…GPRP) and 380–398 (PGAP…APRP). The segment covering 419–429 (PRPGGFGGAPG) has biased composition (gly residues). The span at 461 to 471 (PRGRSDDDVMR) shows a compositional bias: basic and acidic residues. Over residues 473–482 (PRGRGKRGKK) the composition is skewed to basic residues. The 168-residue stretch at 578–745 (TRPPVVTIMG…LIAIQAEILE (168 aa)) folds into the tr-type G domain. A G1 region spans residues 587 to 594 (GHVDHGKT). 587–594 (GHVDHGKT) provides a ligand contact to GTP. The tract at residues 612–616 (GITQH) is G2. Residues 633–636 (DTPG) form a G3 region. GTP is bound by residues 633-637 (DTPGH) and 687-690 (NKMD). The segment at 687-690 (NKMD) is G4. The interval 723-725 (SAK) is G5.

This sequence belongs to the TRAFAC class translation factor GTPase superfamily. Classic translation factor GTPase family. IF-2 subfamily.

It is found in the cytoplasm. Functionally, one of the essential components for the initiation of protein synthesis. Protects formylmethionyl-tRNA from spontaneous hydrolysis and promotes its binding to the 30S ribosomal subunits. Also involved in the hydrolysis of GTP during the formation of the 70S ribosomal complex. The chain is Translation initiation factor IF-2 from Nitratidesulfovibrio vulgaris (strain DP4) (Desulfovibrio vulgaris).